A 195-amino-acid chain; its full sequence is Adenylate kinase (195 aa).

11 to 16 (GAGKGT) provides a ligand contact to ATP. The NMP stretch occupies residues 31 to 60 (STGDIFRAAVRNQTPLGQQVQAYLDSGRLV). AMP-binding positions include threonine 32, arginine 37, 58–60 (RLV), 86–89 (GFPR), and glutamine 93. Positions 127–137 (LRAEKESRKDD) are LID. Residue arginine 128 coordinates ATP. AMP is bound by residues arginine 134 and arginine 145. Glutamine 173 lines the ATP pocket.

The protein belongs to the adenylate kinase family. Monomer.

The protein resides in the cytoplasm. It catalyses the reaction AMP + ATP = 2 ADP. It participates in purine metabolism; AMP biosynthesis via salvage pathway; AMP from ADP: step 1/1. Its function is as follows. Catalyzes the reversible transfer of the terminal phosphate group between ATP and AMP. Plays an important role in cellular energy homeostasis and in adenine nucleotide metabolism. This Cyanothece sp. (strain PCC 7425 / ATCC 29141) protein is Adenylate kinase.